Reading from the N-terminus, the 32-residue chain is uncharacterized protein (32 aa).

This is an uncharacterized protein from Saccharomyces cerevisiae (strain ATCC 204508 / S288c) (Baker's yeast).